The sequence spans 451 residues: Chromosomal replication initiator protein DnaA (451 aa).

The tract at residues 1–82 (MENSLWKQCL…RLELQIGSSA (82 aa)) is domain I, interacts with DnaA modulators. The tract at residues 82-114 (AVVAPPRRRQVSVTTPSPSAAADQTPATRSAAS) is domain II. The interval 85 to 112 (APPRRRQVSVTTPSPSAAADQTPATRSA) is disordered. Residues 115-331 (NLNSNFTFDT…GALRRVVANA (217 aa)) form a domain III, AAA+ region region. Residues Gly-159, Gly-161, Lys-162, and Thr-163 each coordinate ATP. Positions 332–451 (QFTGQEITVE…YSNLLRTLST (120 aa)) are domain IV, binds dsDNA.

Belongs to the DnaA family. Oligomerizes as a right-handed, spiral filament on DNA at oriC.

It is found in the cytoplasm. Plays an essential role in the initiation and regulation of chromosomal replication. ATP-DnaA binds to the origin of replication (oriC) to initiate formation of the DNA replication initiation complex once per cell cycle. Binds the DnaA box (a 9 base pair repeat at the origin) and separates the double-stranded (ds)DNA. Forms a right-handed helical filament on oriC DNA; dsDNA binds to the exterior of the filament while single-stranded (ss)DNA is stabiized in the filament's interior. The ATP-DnaA-oriC complex binds and stabilizes one strand of the AT-rich DNA unwinding element (DUE), permitting loading of DNA polymerase. After initiation quickly degrades to an ADP-DnaA complex that is not apt for DNA replication. Binds acidic phospholipids. This chain is Chromosomal replication initiator protein DnaA, found in Alkalilimnicola ehrlichii (strain ATCC BAA-1101 / DSM 17681 / MLHE-1).